Consider the following 401-residue polypeptide: Probable trafficking protein particle complex subunit 13 homolog (401 aa).

The protein belongs to the TRAPPC13 family.

The polypeptide is Probable trafficking protein particle complex subunit 13 homolog (Caenorhabditis briggsae).